Reading from the N-terminus, the 475-residue chain is MKNYETVIGLEVHVELATKTKIFCACSTAFGGAPNTHTCPVCTGQPGSLPVLNKQVVEYAVAVGLATNCTITQYSKFDRKNYFYPDNPQNYQISQLYLPICRNGSVEIETANGKKNVRIHEIHMEEDAGKLVHDEWEDVSIVDYNRSGVPLIEIVSEPDMRSAEEVIAYLETLRQTIQYLGASDCKLNEGSMRADVNISVREVGAKKFGTRTEMKNLNSFKAIAHAIEGERERQIELLEMGRKVVQETRRWDDNKESSHAMRSKEDAQDYRYFPEPDLVPIVVSDEWIAQIKAKQPELRPQKLARYKKEYDIPEYDAKILTESKHMADIFEAATKLCGKPKKVSNWLMVETMRLLKDNDMDADAIKFSPVNLAKLVDLVDAGTINSSVAKEVFEKIFREDIDPEQYVEENGLKSMNDEGELKVTIQAVIDANPQAVEDYHNGKKKAIGALVGQTMKATKGKANPAVVNKLLMELL.

It belongs to the GatB/GatE family. GatB subfamily. In terms of assembly, heterotrimer of A, B and C subunits.

It carries out the reaction L-glutamyl-tRNA(Gln) + L-glutamine + ATP + H2O = L-glutaminyl-tRNA(Gln) + L-glutamate + ADP + phosphate + H(+). It catalyses the reaction L-aspartyl-tRNA(Asn) + L-glutamine + ATP + H2O = L-asparaginyl-tRNA(Asn) + L-glutamate + ADP + phosphate + 2 H(+). Functionally, allows the formation of correctly charged Asn-tRNA(Asn) or Gln-tRNA(Gln) through the transamidation of misacylated Asp-tRNA(Asn) or Glu-tRNA(Gln) in organisms which lack either or both of asparaginyl-tRNA or glutaminyl-tRNA synthetases. The reaction takes place in the presence of glutamine and ATP through an activated phospho-Asp-tRNA(Asn) or phospho-Glu-tRNA(Gln). In Agathobacter rectalis (strain ATCC 33656 / DSM 3377 / JCM 17463 / KCTC 5835 / VPI 0990) (Eubacterium rectale), this protein is Aspartyl/glutamyl-tRNA(Asn/Gln) amidotransferase subunit B.